Here is a 642-residue protein sequence, read N- to C-terminus: Transcription factor 4 (642 aa).

Residues methionine 1–asparagine 25 are compositionally biased toward polar residues. Residues methionine 1–arginine 59 are essential for MYOD1 inhibition. Disordered regions lie at residues methionine 1–glycine 296, histidine 311–leucine 354, proline 444–asparagine 545, and lysine 609–methionine 642. Residues serine 42, serine 63, and serine 68 each carry the phosphoserine modification. Polar residues-rich tracts occupy residues glycine 83–histidine 98, glycine 112–asparagine 130, proline 181–phenylalanine 191, glycine 218–cysteine 230, and proline 241–isoleucine 281. Low complexity predominate over residues threonine 312 to proline 323. Residues asparagine 340–asparagine 349 are compositionally biased toward polar residues. Serine 347 carries the post-translational modification Phosphoserine. Positions leucine 354–leucine 375 are leucine-zipper. 2 stretches are compositionally biased toward low complexity: residues proline 444–glutamine 455 and glycine 478–glutamate 487. Serine 490 is subject to Phosphoserine. 2 stretches are compositionally biased toward basic and acidic residues: residues lysine 502 to lysine 517 and proline 530 to asparagine 545. A bHLH domain is found at glutamate 539 to leucine 592. A class A specific domain region spans residues glutamine 594 to serine 617.

In terms of assembly, efficient DNA binding requires dimerization with another bHLH protein. Forms homo- or heterooligomers with myogenin. Interacts with HIVEP2. Interacts with NEUROD2. Interacts with AGBL1. In terms of tissue distribution, widely expressed.

The protein localises to the nucleus. Its function is as follows. Transcription factor that binds to the immunoglobulin enhancer Mu-E5/KE5-motif. Involved in the initiation of neuronal differentiation. Activates transcription by binding to the E box (5'-CANNTG-3'). Binds to the thyroglobulin promoter. This chain is Transcription factor 4 (TCF4), found in Canis lupus familiaris (Dog).